Here is a 677-residue protein sequence, read N- to C-terminus: DNA ligase (677 aa).

Residues 34 to 38, 83 to 84, and E117 contribute to the NAD(+) site; these read DAEYD and SL. K119 acts as the N6-AMP-lysine intermediate in catalysis. NAD(+)-binding residues include R140, E175, K283, and K307. Residues C401, C404, C419, and C425 each coordinate Zn(2+). Residues 594-677 form the BRCT domain; it reads SHLSLLHGKT…QYISPNTNEN (84 aa).

Belongs to the NAD-dependent DNA ligase family. LigA subfamily. It depends on Mg(2+) as a cofactor. Mn(2+) is required as a cofactor.

It carries out the reaction NAD(+) + (deoxyribonucleotide)n-3'-hydroxyl + 5'-phospho-(deoxyribonucleotide)m = (deoxyribonucleotide)n+m + AMP + beta-nicotinamide D-nucleotide.. Its function is as follows. DNA ligase that catalyzes the formation of phosphodiester linkages between 5'-phosphoryl and 3'-hydroxyl groups in double-stranded DNA using NAD as a coenzyme and as the energy source for the reaction. It is essential for DNA replication and repair of damaged DNA. In Ehrlichia canis (strain Jake), this protein is DNA ligase.